A 64-amino-acid chain; its full sequence is MLKFLLKFRKRRRPVVVPRFVRFIVYVVLFTVAVQRVKQERDAHLRRYEERLRKNRARRRQSFP.

The chain crosses the membrane as a helical span at residues valine 15–valine 37.

The protein belongs to the HHV-5 US34A protein family.

The protein resides in the host membrane. This is an uncharacterized protein from Human cytomegalovirus (strain AD169) (HHV-5).